Here is a 213-residue protein sequence, read N- to C-terminus: Ribosomal RNA small subunit methyltransferase G (213 aa).

Residues Gly-81, Leu-86, 132 to 133, and Arg-147 each bind S-adenosyl-L-methionine; that span reads VE.

This sequence belongs to the methyltransferase superfamily. RNA methyltransferase RsmG family.

The protein localises to the cytoplasm. The catalysed reaction is guanosine(527) in 16S rRNA + S-adenosyl-L-methionine = N(7)-methylguanosine(527) in 16S rRNA + S-adenosyl-L-homocysteine. Functionally, specifically methylates the N7 position of guanine in position 527 of 16S rRNA. This Mannheimia succiniciproducens (strain KCTC 0769BP / MBEL55E) protein is Ribosomal RNA small subunit methyltransferase G.